Consider the following 84-residue polypeptide: Small ribosomal subunit protein uS17 (84 aa).

The protein belongs to the universal ribosomal protein uS17 family. In terms of assembly, part of the 30S ribosomal subunit.

Functionally, one of the primary rRNA binding proteins, it binds specifically to the 5'-end of 16S ribosomal RNA. This Clostridium novyi (strain NT) protein is Small ribosomal subunit protein uS17.